The chain runs to 1354 residues: Rho-associated protein kinase 1 (1354 aa).

Ser2 bears the N-acetylserine mark. The Protein kinase domain occupies 76–338 (YEVVKVIGRG…VEEIKRHLFF (263 aa)). ATP-binding positions include 82–90 (IGRGAFGEV) and Lys105. Asp198 (proton acceptor) is an active-site residue. The region spanning 341 to 409 (DQWAWETLRD…YSNRRYLPSA (69 aa)) is the AGC-kinase C-terminal domain. The interaction with FHOD1 stretch occupies residues 368–727 (FDDLEEDKGD…KKLKEEREAR (360 aa)). Positions 422–692 (KSLQESLQKT…RLEQEVNEHK (271 aa)) form a coiled coil. Positions 479–556 (SAVSQIEKEK…LEEANDLLRT (78 aa)) constitute an REM-1 domain. The tract at residues 707-946 (EAKSVAMCEM…TVSRLEETNS (240 aa)) is SHROOM3 binding. The RhoBD domain occupies 949-1015 (TKDIEMLRKE…LAEIMNRKDF (67 aa)). An RHOA binding region spans residues 998 to 1010 (LKTQAVNKLAEIM). Residues 1011-1102 (NRKDFKIDRK…KLLDLSDSTS (92 aa)) adopt a coiled-coil conformation. Ser1105 and Ser1108 each carry phosphoserine. The tract at residues 1115–1354 (NLPESRIEGW…VVKNTSGKTS (240 aa)) is auto-inhibitory. The 200-residue stretch at 1118–1317 (ESRIEGWLSV…WVTHLVKKIP (200 aa)) folds into the PH domain. A Phorbol-ester/DAG-type zinc finger spans residues 1228 to 1283 (GHEFIPTLYHFPANCEACAKPLWHVFKPPPALECRRCHVKCHRDHLDKKEDLISPC). The residue at position 1328 (Ser1328) is a Phosphoserine. A disordered region spans residues 1333-1354 (STRSTANQSFRKVVKNTSGKTS).

It belongs to the protein kinase superfamily. AGC Ser/Thr protein kinase family. As to quaternary structure, homodimer. Interacts with RHOA (activated by GTP), RHOB, RHOC, GEM, MYLC2B, RHOE, PPP1R12A, LIMK1, LIMK2, TSG101, CHORDC1, DAPK3, PFN1 and JIP3. Interacts with FHOD1 in a Src-dependent manner. Interacts with PTEN. Interacts with ITGB1BP1 (via N-terminus and PTB domain). Interacts with SHROOM3. Requires Mg(2+) as cofactor. In terms of processing, autophosphorylated on serine and threonine residues. Cleaved by caspase-3 during apoptosis. This leads to constitutive activation of the kinase and membrane blebbing. As to expression, highly expressed in brain, heart, lung, liver, stomach, spleen, kidney, testis, muscle, embryo and placenta.

It localises to the cytoplasm. It is found in the cytoskeleton. The protein resides in the microtubule organizing center. Its subcellular location is the centrosome. The protein localises to the centriole. It localises to the golgi apparatus membrane. It is found in the cell projection. The protein resides in the bleb. Its subcellular location is the cell membrane. The protein localises to the lamellipodium. It localises to the ruffle. It carries out the reaction L-seryl-[protein] + ATP = O-phospho-L-seryl-[protein] + ADP + H(+). It catalyses the reaction L-threonyl-[protein] + ATP = O-phospho-L-threonyl-[protein] + ADP + H(+). Activated by RHOA binding. Inhibited by Y-27632. Protein kinase which is a key regulator of the actin cytoskeleton and cell polarity. Involved in regulation of smooth muscle contraction, actin cytoskeleton organization, stress fiber and focal adhesion formation, neurite retraction, cell adhesion and motility via phosphorylation of DAPK3, GFAP, LIMK1, LIMK2, MYL9/MLC2, TPPP, PFN1 and PPP1R12A. Phosphorylates FHOD1 and acts synergistically with it to promote SRC-dependent non-apoptotic plasma membrane blebbing. Phosphorylates JIP3 and regulates the recruitment of JNK to JIP3 upon UVB-induced stress. Acts as a suppressor of inflammatory cell migration by regulating PTEN phosphorylation and stability. Acts as a negative regulator of VEGF-induced angiogenic endothelial cell activation. Required for centrosome positioning and centrosome-dependent exit from mitosis. Plays a role in terminal erythroid differentiation. Inhibits podocyte motility via regulation of actin cytoskeletal dynamics and phosphorylation of CFL1. Promotes keratinocyte terminal differentiation. Involved in osteoblast compaction through the fibronectin fibrillogenesis cell-mediated matrix assembly process, essential for osteoblast mineralization. May regulate closure of the eyelids and ventral body wall by inducing the assembly of actomyosin bundles. In Mus musculus (Mouse), this protein is Rho-associated protein kinase 1 (Rock1).